The primary structure comprises 392 residues: 8-amino-7-oxononanoate synthase (392 aa).

Arg26 contributes to the substrate binding site. A pyridoxal 5'-phosphate-binding site is contributed by 112-113 (GF). A substrate-binding site is contributed by His137. Pyridoxal 5'-phosphate contacts are provided by Ser187, His215, and Thr241. Lys244 is modified (N6-(pyridoxal phosphate)lysine). Thr357 is a binding site for substrate.

The protein belongs to the class-II pyridoxal-phosphate-dependent aminotransferase family. BioF subfamily. In terms of assembly, homodimer. Pyridoxal 5'-phosphate serves as cofactor.

It carries out the reaction 6-carboxyhexanoyl-[ACP] + L-alanine + H(+) = (8S)-8-amino-7-oxononanoate + holo-[ACP] + CO2. It functions in the pathway cofactor biosynthesis; biotin biosynthesis. In terms of biological role, catalyzes the decarboxylative condensation of pimeloyl-[acyl-carrier protein] and L-alanine to produce 8-amino-7-oxononanoate (AON), [acyl-carrier protein], and carbon dioxide. This Photobacterium profundum (strain SS9) protein is 8-amino-7-oxononanoate synthase.